Here is a 197-residue protein sequence, read N- to C-terminus: Peptidyl-tRNA hydrolase (197 aa).

Residue Y23 participates in tRNA binding. The active-site Proton acceptor is H28. TRNA-binding residues include F73, N75, and N121.

The protein belongs to the PTH family. As to quaternary structure, monomer.

Its subcellular location is the cytoplasm. The enzyme catalyses an N-acyl-L-alpha-aminoacyl-tRNA + H2O = an N-acyl-L-amino acid + a tRNA + H(+). Its function is as follows. Hydrolyzes ribosome-free peptidyl-tRNAs (with 1 or more amino acids incorporated), which drop off the ribosome during protein synthesis, or as a result of ribosome stalling. In terms of biological role, catalyzes the release of premature peptidyl moieties from peptidyl-tRNA molecules trapped in stalled 50S ribosomal subunits, and thus maintains levels of free tRNAs and 50S ribosomes. The polypeptide is Peptidyl-tRNA hydrolase (Frankia alni (strain DSM 45986 / CECT 9034 / ACN14a)).